Reading from the N-terminus, the 176-residue chain is ATP-dependent protease subunit HslV (176 aa).

T6 is an active-site residue. Residues S161, C164, and T167 each contribute to the Na(+) site.

It belongs to the peptidase T1B family. HslV subfamily. A double ring-shaped homohexamer of HslV is capped on each side by a ring-shaped HslU homohexamer. The assembly of the HslU/HslV complex is dependent on binding of ATP.

The protein resides in the cytoplasm. It catalyses the reaction ATP-dependent cleavage of peptide bonds with broad specificity.. With respect to regulation, allosterically activated by HslU binding. Its function is as follows. Protease subunit of a proteasome-like degradation complex believed to be a general protein degrading machinery. The chain is ATP-dependent protease subunit HslV from Pseudothermotoga lettingae (strain ATCC BAA-301 / DSM 14385 / NBRC 107922 / TMO) (Thermotoga lettingae).